A 350-amino-acid chain; its full sequence is Biotin synthase (350 aa).

A Radical SAM core domain is found at 41-268; the sequence is NEVQISRLLS…LSRVRLSAGR (228 aa). Residues C56, C60, and C63 each coordinate [4Fe-4S] cluster. Residues C100, C131, C191, and R263 each contribute to the [2Fe-2S] cluster site.

Belongs to the radical SAM superfamily. Biotin synthase family. In terms of assembly, homodimer. [4Fe-4S] cluster is required as a cofactor. [2Fe-2S] cluster serves as cofactor.

It catalyses the reaction (4R,5S)-dethiobiotin + (sulfur carrier)-SH + 2 reduced [2Fe-2S]-[ferredoxin] + 2 S-adenosyl-L-methionine = (sulfur carrier)-H + biotin + 2 5'-deoxyadenosine + 2 L-methionine + 2 oxidized [2Fe-2S]-[ferredoxin]. It participates in cofactor biosynthesis; biotin biosynthesis; biotin from 7,8-diaminononanoate: step 2/2. Its function is as follows. Catalyzes the conversion of dethiobiotin (DTB) to biotin by the insertion of a sulfur atom into dethiobiotin via a radical-based mechanism. This chain is Biotin synthase, found in Shewanella baltica (strain OS223).